We begin with the raw amino-acid sequence, 132 residues long: Myelin P2 protein (132 aa).

N-acetylserine is present on S2. (9Z)-octadecenoate is bound by residues R107 and 127 to 129 (RIY). Hexadecanoate is bound by residues R107 and 127-129 (RIY).

This sequence belongs to the calycin superfamily. Fatty-acid binding protein (FABP) family. In terms of assembly, monomer.

It localises to the cytoplasm. May play a role in lipid transport protein in Schwann cells. May bind cholesterol. This is Myelin P2 protein (PMP2) from Oryctolagus cuniculus (Rabbit).